We begin with the raw amino-acid sequence, 342 residues long: NADH-ubiquinone oxidoreductase chain 2 (342 aa).

9 helical membrane passes run T25 to L45, I58 to I78, M94 to P114, M146 to L166, I174 to E194, N195 to F215, F238 to P258, L274 to F294, and V316 to F336.

The protein belongs to the complex I subunit 2 family.

Its subcellular location is the mitochondrion inner membrane. It carries out the reaction a ubiquinone + NADH + 5 H(+)(in) = a ubiquinol + NAD(+) + 4 H(+)(out). Core subunit of the mitochondrial membrane respiratory chain NADH dehydrogenase (Complex I) that is believed to belong to the minimal assembly required for catalysis. Complex I functions in the transfer of electrons from NADH to the respiratory chain. The immediate electron acceptor for the enzyme is believed to be ubiquinone. This is NADH-ubiquinone oxidoreductase chain 2 (ND2) from Locusta migratoria (Migratory locust).